Reading from the N-terminus, the 118-residue chain is U-scoloptoxin(05)-Cw1a (118 aa).

Positions 1-22 are cleaved as a signal peptide; the sequence is MNPLNLSTFIVFTLFAASATTA.

The protein belongs to the scoloptoxin-05 family. Post-translationally, contains 5 disulfide bonds. Expressed by the venom gland.

The protein localises to the secreted. In Cormocephalus westwoodi (Westwood's green centipede), this protein is U-scoloptoxin(05)-Cw1a.